Reading from the N-terminus, the 187-residue chain is Protein ECM23 (187 aa).

Disordered regions lie at residues 106–127 and 167–187; these read GKKSLAGYRPKSRKKQTILPNG and KKIRSQQSSDDGTKNFIFKNK. The segment at 126 to 180 adopts a GATA-type zinc-finger fold; sequence NGQPKECATCGDTWTSQWRSGPNGNVELCSRCGIAYRKKMEKKIRSQQSSDDGTK.

In terms of biological role, involved in morphogenesis. May be involved in cell wall organization and biogenesis. This is Protein ECM23 (ECM23) from Saccharomyces cerevisiae (strain ATCC 204508 / S288c) (Baker's yeast).